A 487-amino-acid polypeptide reads, in one-letter code: Protein nucleotidyltransferase YdiU (487 aa).

Positions 90, 92, 93, 113, 125, 126, 176, and 183 each coordinate ATP. The active-site Proton acceptor is the Asp-252. Mg(2+) contacts are provided by Asn-253 and Asp-262. Asp-262 contacts ATP.

This sequence belongs to the SELO family. Mg(2+) serves as cofactor. The cofactor is Mn(2+).

It carries out the reaction L-seryl-[protein] + ATP = 3-O-(5'-adenylyl)-L-seryl-[protein] + diphosphate. It catalyses the reaction L-threonyl-[protein] + ATP = 3-O-(5'-adenylyl)-L-threonyl-[protein] + diphosphate. The enzyme catalyses L-tyrosyl-[protein] + ATP = O-(5'-adenylyl)-L-tyrosyl-[protein] + diphosphate. The catalysed reaction is L-histidyl-[protein] + UTP = N(tele)-(5'-uridylyl)-L-histidyl-[protein] + diphosphate. It carries out the reaction L-seryl-[protein] + UTP = O-(5'-uridylyl)-L-seryl-[protein] + diphosphate. It catalyses the reaction L-tyrosyl-[protein] + UTP = O-(5'-uridylyl)-L-tyrosyl-[protein] + diphosphate. Its function is as follows. Nucleotidyltransferase involved in the post-translational modification of proteins. It can catalyze the addition of adenosine monophosphate (AMP) or uridine monophosphate (UMP) to a protein, resulting in modifications known as AMPylation and UMPylation. The polypeptide is Protein nucleotidyltransferase YdiU (Ectopseudomonas mendocina (strain ymp) (Pseudomonas mendocina)).